Reading from the N-terminus, the 215-residue chain is ATP-dependent dethiobiotin synthetase BioD (215 aa).

13-18 serves as a coordination point for ATP; the sequence is DIGKTV. Thr-17 lines the Mg(2+) pocket. Lys-38 is a catalytic residue. Thr-42 serves as a coordination point for substrate. ATP contacts are provided by residues Asp-50, 115–118, and 175–176; these read EGAG and NH. Mg(2+) is bound by residues Asp-50 and Glu-115.

It belongs to the dethiobiotin synthetase family. In terms of assembly, homodimer. It depends on Mg(2+) as a cofactor.

The protein localises to the cytoplasm. The catalysed reaction is (7R,8S)-7,8-diammoniononanoate + CO2 + ATP = (4R,5S)-dethiobiotin + ADP + phosphate + 3 H(+). Its pathway is cofactor biosynthesis; biotin biosynthesis; biotin from 7,8-diaminononanoate: step 1/2. Its function is as follows. Catalyzes a mechanistically unusual reaction, the ATP-dependent insertion of CO2 between the N7 and N8 nitrogen atoms of 7,8-diaminopelargonic acid (DAPA, also called 7,8-diammoniononanoate) to form a ureido ring. The polypeptide is ATP-dependent dethiobiotin synthetase BioD (Neisseria meningitidis serogroup B (strain ATCC BAA-335 / MC58)).